We begin with the raw amino-acid sequence, 290 residues long: Nucleotide-binding protein LAR_0375 (290 aa).

13–20 (GMSGAGKT) is a binding site for ATP. 63–66 (DMRS) lines the GTP pocket.

The protein belongs to the RapZ-like family.

Displays ATPase and GTPase activities. The chain is Nucleotide-binding protein LAR_0375 from Limosilactobacillus reuteri subsp. reuteri (strain JCM 1112) (Lactobacillus reuteri).